Reading from the N-terminus, the 496-residue chain is Amidophosphoribosyltransferase (496 aa).

Residues 1-21 constitute a propeptide that is removed on maturation; it reads MNQSHSFPTDDPLDGDTLHEE. The active-site Nucleophile is Cys22. The Glutamine amidotransferase type-2 domain occupies 22-241; sequence CGVFGILGHP…NGEVIICEIQ (220 aa).

In the C-terminal section; belongs to the purine/pyrimidine phosphoribosyltransferase family.

It catalyses the reaction 5-phospho-beta-D-ribosylamine + L-glutamate + diphosphate = 5-phospho-alpha-D-ribose 1-diphosphate + L-glutamine + H2O. It participates in purine metabolism; IMP biosynthesis via de novo pathway; N(1)-(5-phospho-D-ribosyl)glycinamide from 5-phospho-alpha-D-ribose 1-diphosphate: step 1/2. In terms of biological role, catalyzes the formation of phosphoribosylamine from phosphoribosylpyrophosphate (PRPP) and glutamine. This chain is Amidophosphoribosyltransferase, found in Rhizobium etli (strain ATCC 51251 / DSM 11541 / JCM 21823 / NBRC 15573 / CFN 42).